Here is a 1866-residue protein sequence, read N- to C-terminus: Rho GTPase-activating protein 100F (1866 aa).

Disordered stretches follow at residues 22–98 (MLCC…AGVK), 262–336 (RRGN…NNYS), and 466–530 (LRSS…DTEA). A compositionally biased stretch (low complexity) spans 59 to 77 (GNQQHHGNQQHHGNQQQHH). The PDZ domain occupies 179–264 (LVEIVKRPGQ…LVLAIRQRRG (86 aa)). The segment covering 271–286 (PGPPTLSRPEQKPPPV) has biased composition (pro residues). Over residues 301–326 (TDRMPRPRSSRDRRTGDGREMTESRS) the composition is skewed to basic and acidic residues. Ser-719 carries the phosphoserine modification. A disordered region spans residues 745–775 (AGPASPSGSILSTGGHQSPAPTPSATLPRPH). Residues 750 to 760 (PSGSILSTGGH) are compositionally biased toward polar residues. Positions 789-908 (KLDKPIVDIG…LRQSPLHQLA (120 aa)) constitute a C2 domain. Residues 948-1148 (ADLETVVNRE…YLLQIWPQPQ (201 aa)) form the Rho-GAP domain. 6 disordered regions span residues 1273–1328 (GGSV…QVKI), 1356–1380 (PTTQ…RRGN), 1393–1479 (SVVN…DLVS), 1514–1607 (FTPI…MVST), 1644–1727 (YTND…YGTL), and 1819–1840 (DEKP…ADKG). Residues 1282–1292 (DPSPLPLPGTP) are compositionally biased toward pro residues. Residues 1293–1302 (SPGSSSASTG) are compositionally biased toward low complexity. Composition is skewed to polar residues over residues 1356–1377 (PTTQ…TASR), 1393–1408 (SVVN…YTGS), and 1416–1429 (GNSS…NASG). Low complexity predominate over residues 1443-1479 (SSATSSSSSSQATVLSAGSTATSAPTTSSDDSDDLVS). Positions 1538-1587 (QLVTPISGSSSKPGATTGAISKYTTGSVESSINANSQKLSSPSRLCNSKD) are enriched in polar residues. Low complexity-rich tracts occupy residues 1590–1607 (SRTG…MVST) and 1644–1658 (YTND…SSKS). Residues 1659–1670 (GIGGGSGTGLGA) show a composition bias toward gly residues. Composition is skewed to low complexity over residues 1671-1688 (VSGA…LFGS) and 1696-1720 (GSSH…NHNT). The segment covering 1830-1839 (HGEEKLGADK) has biased composition (basic and acidic residues).

As to quaternary structure, interacts (via PDZ domain) with Nrx-1; may recruit Nrx-1 to the presynaptic active zone.

The protein localises to the presynapse. Its function is as follows. GTPase activator for the Rho-type GTPases by converting them to an inactive GDP-bound state. Promotes the anchoring of Liprin-alpha clusters at synapses. Recruits and keeps Nrx-1 levels high in active zones in the presynapse opposite the postsynaptic region. This chain is Rho GTPase-activating protein 100F (RhoGAP100F), found in Drosophila melanogaster (Fruit fly).